The sequence spans 302 residues: Elongation factor Ts (302 aa).

The involved in Mg(2+) ion dislocation from EF-Tu stretch occupies residues 80–83; sequence TDFV.

It belongs to the EF-Ts family.

It localises to the cytoplasm. Functionally, associates with the EF-Tu.GDP complex and induces the exchange of GDP to GTP. It remains bound to the aminoacyl-tRNA.EF-Tu.GTP complex up to the GTP hydrolysis stage on the ribosome. The chain is Elongation factor Ts from Gluconobacter oxydans (strain 621H) (Gluconobacter suboxydans).